We begin with the raw amino-acid sequence, 391 residues long: tRNA-specific 2-thiouridylase MnmA (391 aa).

ATP-binding positions include 9-16 (GMSGGVDS) and M35. Residues 95–97 (NPD) are interaction with target base in tRNA. The Nucleophile role is filled by C100. C100 and C196 are joined by a disulfide. G124 is a binding site for ATP. Residues 146 to 148 (KDQ) are interaction with tRNA. C196 functions as the Cysteine persulfide intermediate in the catalytic mechanism. Residues 308-309 (RY) are interaction with tRNA. The span at 372–382 (TGQPGQATSTG) shows a compositional bias: polar residues. Residues 372–391 (TGQPGQATSTGHAPALAEAR) form a disordered region.

This sequence belongs to the MnmA/TRMU family.

The protein resides in the cytoplasm. The catalysed reaction is S-sulfanyl-L-cysteinyl-[protein] + uridine(34) in tRNA + AH2 + ATP = 2-thiouridine(34) in tRNA + L-cysteinyl-[protein] + A + AMP + diphosphate + H(+). Its function is as follows. Catalyzes the 2-thiolation of uridine at the wobble position (U34) of tRNA, leading to the formation of s(2)U34. The polypeptide is tRNA-specific 2-thiouridylase MnmA (Burkholderia cenocepacia (strain ATCC BAA-245 / DSM 16553 / LMG 16656 / NCTC 13227 / J2315 / CF5610) (Burkholderia cepacia (strain J2315))).